A 733-amino-acid polypeptide reads, in one-letter code: Phosphoribosylformylglycinamidine synthase subunit PurL (733 aa).

H32 is a catalytic residue. Y35 lines the ATP pocket. Mg(2+) is bound at residue E81. Substrate-binding positions include 82–85 and R104; that span reads SHNH. The Proton acceptor role is filled by H83. A Mg(2+)-binding site is contributed by D105. Residue Q230 participates in substrate binding. A Mg(2+)-binding site is contributed by D258. 301 to 303 contacts substrate; it reads ESQ. D482 and G519 together coordinate ATP. N520 provides a ligand contact to Mg(2+). S522 lines the substrate pocket.

The protein belongs to the FGAMS family. Monomer. Part of the FGAM synthase complex composed of 1 PurL, 1 PurQ and 2 PurS subunits.

It localises to the cytoplasm. The enzyme catalyses N(2)-formyl-N(1)-(5-phospho-beta-D-ribosyl)glycinamide + L-glutamine + ATP + H2O = 2-formamido-N(1)-(5-O-phospho-beta-D-ribosyl)acetamidine + L-glutamate + ADP + phosphate + H(+). Its pathway is purine metabolism; IMP biosynthesis via de novo pathway; 5-amino-1-(5-phospho-D-ribosyl)imidazole from N(2)-formyl-N(1)-(5-phospho-D-ribosyl)glycinamide: step 1/2. Its function is as follows. Part of the phosphoribosylformylglycinamidine synthase complex involved in the purines biosynthetic pathway. Catalyzes the ATP-dependent conversion of formylglycinamide ribonucleotide (FGAR) and glutamine to yield formylglycinamidine ribonucleotide (FGAM) and glutamate. The FGAM synthase complex is composed of three subunits. PurQ produces an ammonia molecule by converting glutamine to glutamate. PurL transfers the ammonia molecule to FGAR to form FGAM in an ATP-dependent manner. PurS interacts with PurQ and PurL and is thought to assist in the transfer of the ammonia molecule from PurQ to PurL. This chain is Phosphoribosylformylglycinamidine synthase subunit PurL, found in Methanocaldococcus jannaschii (strain ATCC 43067 / DSM 2661 / JAL-1 / JCM 10045 / NBRC 100440) (Methanococcus jannaschii).